The following is a 354-amino-acid chain: Transcription termination factor 3, mitochondrial (354 aa).

A mitochondrion-targeting transit peptide spans Met1–Asn89.

This sequence belongs to the mTERF family.

It is found in the mitochondrion. Binds promoter DNA and regulates initiation of transcription. Regulator of mitochondrial ribosome biogenesis and translation that is essential for development. Required for normal mitochondrial transcription and translation. Required for assembly of mitochondrial respiratory complexes and normal mitochondrial function. Maintains 16S rRNA levels and functions in mitochondrial ribosome assembly by regulating the biogenesis of the 39S ribosomal subunit. This Drosophila melanogaster (Fruit fly) protein is Transcription termination factor 3, mitochondrial.